A 93-amino-acid chain; its full sequence is Pyrimidine/purine nucleoside phosphorylase (93 aa).

It belongs to the nucleoside phosphorylase PpnP family.

The enzyme catalyses a purine D-ribonucleoside + phosphate = a purine nucleobase + alpha-D-ribose 1-phosphate. It carries out the reaction adenosine + phosphate = alpha-D-ribose 1-phosphate + adenine. It catalyses the reaction cytidine + phosphate = cytosine + alpha-D-ribose 1-phosphate. The catalysed reaction is guanosine + phosphate = alpha-D-ribose 1-phosphate + guanine. The enzyme catalyses inosine + phosphate = alpha-D-ribose 1-phosphate + hypoxanthine. It carries out the reaction thymidine + phosphate = 2-deoxy-alpha-D-ribose 1-phosphate + thymine. It catalyses the reaction uridine + phosphate = alpha-D-ribose 1-phosphate + uracil. The catalysed reaction is xanthosine + phosphate = alpha-D-ribose 1-phosphate + xanthine. Its function is as follows. Catalyzes the phosphorolysis of diverse nucleosides, yielding D-ribose 1-phosphate and the respective free bases. Can use uridine, adenosine, guanosine, cytidine, thymidine, inosine and xanthosine as substrates. Also catalyzes the reverse reactions. This chain is Pyrimidine/purine nucleoside phosphorylase, found in Magnetococcus marinus (strain ATCC BAA-1437 / JCM 17883 / MC-1).